The chain runs to 229 residues: Large ribosomal subunit protein uL1 (229 aa).

The protein belongs to the universal ribosomal protein uL1 family. In terms of assembly, part of the 50S ribosomal subunit.

Binds directly to 23S rRNA. The L1 stalk is quite mobile in the ribosome, and is involved in E site tRNA release. Its function is as follows. Protein L1 is also a translational repressor protein, it controls the translation of the L11 operon by binding to its mRNA. This is Large ribosomal subunit protein uL1 from Actinobacillus pleuropneumoniae serotype 5b (strain L20).